A 204-amino-acid polypeptide reads, in one-letter code: N-(5'-phosphoribosyl)anthranilate isomerase (204 aa).

It belongs to the TrpF family.

It carries out the reaction N-(5-phospho-beta-D-ribosyl)anthranilate = 1-(2-carboxyphenylamino)-1-deoxy-D-ribulose 5-phosphate. It participates in amino-acid biosynthesis; L-tryptophan biosynthesis; L-tryptophan from chorismate: step 3/5. The protein is N-(5'-phosphoribosyl)anthranilate isomerase of Pseudomonas fluorescens (strain Pf0-1).